The primary structure comprises 118 residues: Large ribosomal subunit protein bL20 (118 aa).

The protein belongs to the bacterial ribosomal protein bL20 family.

Functionally, binds directly to 23S ribosomal RNA and is necessary for the in vitro assembly process of the 50S ribosomal subunit. It is not involved in the protein synthesizing functions of that subunit. The sequence is that of Large ribosomal subunit protein bL20 from Pelagibacter ubique (strain HTCC1062).